The primary structure comprises 931 residues: Protocadherin gamma-B2 (931 aa).

The signal sequence occupies residues 1 to 30 (MKASSGRCGLVRWLQVLLPFLLSLFPGALP). 6 consecutive Cadherin domains span residues 31–133 (VQIR…TPLF), 134–242 (KQTK…PPVF), 243–347 (SQDV…APEV), 348–452 (IVTS…APVF), 453–562 (QQTS…APRV), and 570–675 (DGSA…LPDL). At 31 to 691 (VQIRYSIPEE…SDPQAKLQFY (661 aa)) the chain is on the extracellular side. 2 N-linked (GlcNAc...) asparagine glycosylation sites follow: asparagine 419 and asparagine 545. Residues 692–712 (LVVALALISVLFFLAVILAIS) form a helical membrane-spanning segment. Residues 713-931 (LRLRLSSRSD…KKKSGKKEKK (219 aa)) are Cytoplasmic-facing. Disordered stretches follow at residues 814 to 840 (DWRF…WPNN) and 901 to 931 (ATLT…KEKK). Over residues 815–840 (WRFSQAQRPGTSGSQNGDDTGTWPNN) the composition is skewed to polar residues. A compositionally biased stretch (basic residues) spans 921–931 (NKKKSGKKEKK).

It is found in the cell membrane. Potential calcium-dependent cell-adhesion protein. May be involved in the establishment and maintenance of specific neuronal connections in the brain. The polypeptide is Protocadherin gamma-B2 (PCDHGB2) (Homo sapiens (Human)).